The chain runs to 380 residues: Probable inactive dehydrogenase easA (380 aa).

FMN contacts are provided by residues 25–27 (PMT), Ala-60, Gln-102, and His-171. Residues His-171 and Asn-174 each contribute to the substrate site. FMN-binding positions include Lys-223, Gly-299, 324-325 (GR), and Arg-325. Position 352 (Tyr-352) interacts with substrate.

It belongs to the NADH:flavin oxidoreductase/NADH oxidase family.

In terms of biological role, probable inactive dehydrogenase; part of the gene cluster that mediates the biosynthesis of fungal ergot alkaloid. DmaW catalyzes the first step of ergot alkaloid biosynthesis by condensing dimethylallyl diphosphate (DMAP) and tryptophan to form 4-dimethylallyl-L-tryptophan. The second step is catalyzed by the methyltransferase easF that methylates 4-dimethylallyl-L-tryptophan in the presence of S-adenosyl-L-methionine, resulting in the formation of 4-dimethylallyl-L-abrine. The catalase easC and the FAD-dependent oxidoreductase easE then transform 4-dimethylallyl-L-abrine to chanoclavine-I which is further oxidized by easD in the presence of NAD(+), resulting in the formation of chanoclavine-I aldehyde. Agroclavine dehydrogenase easG then mediates the conversion of chanoclavine-I aldehyde to agroclavine via a non-enzymatic adduct reaction: the substrate is an iminium intermediate that is formed spontaneously from chanoclavine-I aldehyde in the presence of glutathione. The presence of easA is not required to complete this reaction. Further conversion of agroclavine to paspalic acid is a two-step process involving oxidation of agroclavine to elymoclavine and of elymoclavine to paspalic acid, the second step being performed by the elymoclavine oxidase cloA. Paspalic acid is then further converted to D-lysergic acid. Ergopeptines are assembled from D-lysergic acid and three different amino acids by the D-lysergyl-peptide-synthetases composed each of a monomudular and a trimodular nonribosomal peptide synthetase subunit. LpsB and lpsC encode the monomodular subunits responsible for D-lysergic acid activation and incorporation into the ergopeptine backbone. LpsA1 and A2 subunits encode the trimodular nonribosomal peptide synthetase assembling the tripeptide portion of ergopeptines. LpsA1 is responsible for formation of the major ergopeptine, ergotamine, and lpsA2 for alpha-ergocryptine, the minor ergopeptine of the total alkaloid mixture elaborated by C.purpurea. D-lysergyl-tripeptides are assembled by the nonribosomal peptide synthetases and released as N-(D-lysergyl-aminoacyl)-lactams. Cyclolization of the D-lysergyl-tripeptides is performed by the Fe(2+)/2-ketoglutarate-dependent dioxygenase easH which introduces a hydroxyl group into N-(D-lysergyl-aminoacyl)-lactam at alpha-C of the aminoacyl residue followed by spontaneous condensation with the terminal lactam carbonyl group. This Claviceps purpurea (strain 20.1) (Ergot fungus) protein is Probable inactive dehydrogenase easA.